A 338-amino-acid chain; its full sequence is DNA-directed RNA polymerase subunit alpha (338 aa).

Residues 1-234 (MIQKNWQELT…DQLNVFVNFE (234 aa)) form an alpha N-terminal domain (alpha-NTD) region. Positions 250–338 (FNPALLKKVD…DLAKRFEEHY (89 aa)) are alpha C-terminal domain (alpha-CTD).

This sequence belongs to the RNA polymerase alpha chain family. In terms of assembly, homodimer. The RNAP catalytic core consists of 2 alpha, 1 beta, 1 beta' and 1 omega subunit. When a sigma factor is associated with the core the holoenzyme is formed, which can initiate transcription.

The enzyme catalyses RNA(n) + a ribonucleoside 5'-triphosphate = RNA(n+1) + diphosphate. DNA-dependent RNA polymerase catalyzes the transcription of DNA into RNA using the four ribonucleoside triphosphates as substrates. The polypeptide is DNA-directed RNA polymerase subunit alpha (Methylocella silvestris (strain DSM 15510 / CIP 108128 / LMG 27833 / NCIMB 13906 / BL2)).